A 135-amino-acid polypeptide reads, in one-letter code: U-scoloptoxin(22)-Er1a (135 aa).

The first 24 residues, 1-24 (MAVILKHLAIILLVFVIEIKMGQG), serve as a signal peptide directing secretion. A disordered region spans residues 61–135 (PQITFSTDWG…RSPRYLPTII (75 aa)). Over residues 75 to 127 (SVNEDREAAERERSPQMKRSEHEEQLMAKDEMKRFQEERNPSSDDKIAIDKRS) the composition is skewed to basic and acidic residues.

Belongs to the scoloptoxin-22 family. In terms of tissue distribution, expressed by the venom gland.

It is found in the secreted. In Ethmostigmus rubripes (Giant centipede), this protein is U-scoloptoxin(22)-Er1a.